Consider the following 130-residue polypeptide: MIGNWNYGTGRRKSAVARVFIKSGKGDIIVNGKPIKEYFARETSLMIVRQPLELTAHAETFDIKVNVTGGGETGQAGAVRHGITRALIDYDATLKPTLSKAGYVTRDAREVERKKVGLHKARRRKQFSKR.

Belongs to the universal ribosomal protein uS9 family.

In Cupriavidus metallidurans (strain ATCC 43123 / DSM 2839 / NBRC 102507 / CH34) (Ralstonia metallidurans), this protein is Small ribosomal subunit protein uS9.